A 1620-amino-acid polypeptide reads, in one-letter code: Myb-like protein X (1620 aa).

The span at 1–13 (MSTIGNNASSIGN) shows a compositional bias: polar residues. 4 disordered regions span residues 1 to 57 (MSTI…TTTT), 176 to 204 (TGSG…SNIG), 294 to 318 (FFQD…NMTE), and 450 to 849 (KEEK…TKSA). Residues 28–57 (PPTTTTTTTTTTTTTTTTPTTTTPTTTTTT) show a composition bias toward low complexity. The segment covering 177 to 187 (GSGGIGGGGSG) has biased composition (gly residues). In terms of domain architecture, SWIRM spans 310–421 (GSGSNNMTEI…CFVNSGDYMN (112 aa)). The segment covering 450–497 (KEEKERLEREEKERLEREEKQEKEEKERLEKEEKERLEREEKQEKEEK) has biased composition (basic and acidic residues). The span at 498 to 511 (EEKEEKEENEEKEE) shows a compositional bias: acidic residues. Basic and acidic residues predominate over residues 512-568 (KEEKEKEEKEEKEKQEKEDDKEKQENENEQEKIEKKENKNDSQNKEIKENHDKKDET). A compositionally biased stretch (low complexity) spans 570-598 (DSNNTTTTTTTTTTTSTNTLVAESSSSSS). Positions 606–628 (KEMKEQPVQENKDKEMMETDTTK) are enriched in basic and acidic residues. A compositionally biased stretch (low complexity) spans 629–645 (ENNGVETTETTNQTTDS). Over residues 647-798 (ETDKEMKDQP…EIKKDKLKEN (152 aa)) the composition is skewed to basic and acidic residues. The span at 799 to 834 (EEVEGEIEGENDEGEVVEEDEDEEMEIEEDEEDEED) shows a compositional bias: acidic residues. Residues 925-977 (PEEFGWTDIETLLLLEGIEIFRDNWQEISDYIGGSKTPEQCLTHFIRLPIEDE) form the SANT domain. The interval 1049–1506 (QPSKEELERI…DDDEDVEMET (458 aa)) is disordered. Composition is skewed to basic and acidic residues over residues 1051 to 1195 (SKEE…DKSD), 1219 to 1255 (ETVE…KDDN), and 1264 to 1302 (HNKE…EKDL). The span at 1303–1325 (NNLSESQSSNDQSKSNEQMSSDN) shows a compositional bias: low complexity. Positions 1338-1350 (TQITSKEQNITTD) are enriched in polar residues. Low complexity-rich tracts occupy residues 1358 to 1382 (TPTT…TTNT) and 1390 to 1416 (NETN…ESNN). 2 stretches are compositionally biased toward acidic residues: residues 1467–1481 (EENE…ENDL) and 1493–1504 (VGEEDDDEDVEM).

Its subcellular location is the nucleus. The polypeptide is Myb-like protein X (mybX) (Dictyostelium discoideum (Social amoeba)).